The sequence spans 287 residues: MEGKEEDVNVGANKFPERQPIGTAAQTESKDYKEPPPAPFFEPGELKSWSFYRAGIAEFIATFLFLYVTVLTVMGVKRAPNMCASVGIQGIAWAFGGMIFALVYCTAGISGGHINPAVTFGLFLARKLSLTRALFYIVMQCLGAICGAGVVKGFQPGLYQTNGGGANVVAHGYTKGSGLGAEIVGTFVLVYTVFSATDAKRSARDSHVPILAPLPIGFAVFLVHLATIPITGTGINPARSLGAAIIYNKDHAWDDHWIFWVGPFIGAALAALYHQIVIRAIPFKSKT.

Met-1 is modified (N-acetylmethionine). The disordered stretch occupies residues 1–34; it reads MEGKEEDVNVGANKFPERQPIGTAAQTESKDYKE. The Cytoplasmic segment spans residues 1–55; it reads MEGKEEDVNVGANKFPERQPIGTAAQTESKDYKEPPPAPFFEPGELKSWSFYRAG. A helical membrane pass occupies residues 56-76; it reads IAEFIATFLFLYVTVLTVMGV. At 77-92 the chain is on the extracellular side; it reads KRAPNMCASVGIQGIA. Residues 93–113 form a helical membrane-spanning segment; sequence WAFGGMIFALVYCTAGISGGH. The Cytoplasmic portion of the chain corresponds to 114 to 133; the sequence is INPAVTFGLFLARKLSLTRA. The NPA 1 signature appears at 115–117; that stretch reads NPA. A helical membrane pass occupies residues 134–154; it reads LFYIVMQCLGAICGAGVVKGF. At 155–175 the chain is on the extracellular side; sequence QPGLYQTNGGGANVVAHGYTK. The helical transmembrane segment at 176–196 threads the bilayer; it reads GSGLGAEIVGTFVLVYTVFSA. The Cytoplasmic portion of the chain corresponds to 197–209; it reads TDAKRSARDSHVP. The helical transmembrane segment at 210-230 threads the bilayer; sequence ILAPLPIGFAVFLVHLATIPI. Over 231–257 the chain is Extracellular; that stretch reads TGTGINPARSLGAAIIYNKDHAWDDHW. Residues 236–238 carry the NPA 2 motif; sequence NPA. The helical transmembrane segment at 258-278 threads the bilayer; sequence IFWVGPFIGAALAALYHQIVI. The Cytoplasmic portion of the chain corresponds to 279 to 287; sequence RAIPFKSKT. Ser-285 carries the post-translational modification Phosphoserine.

This sequence belongs to the MIP/aquaporin (TC 1.A.8) family. PIP (TC 1.A.8.11) subfamily. Predominantly expressed in green siliques. Also expressed above ground, in roots and flower buds.

The protein resides in the cell membrane. Aquaporins facilitate the transport of water and small neutral solutes across cell membranes. This is Probable aquaporin PIP1-5 (PIP1-5) from Arabidopsis thaliana (Mouse-ear cress).